Consider the following 1645-residue polypeptide: Histone-lysine N-methyltransferase set-26 (1645 aa).

Disordered regions lie at residues 1 to 82 (MADG…QQIP), 109 to 132 (EPAA…RPTE), 200 to 228 (DAVG…SVAP), 417 to 606 (TPEQ…VLRP), and 651 to 789 (TGQS…DEAA). Composition is skewed to low complexity over residues 16–31 (EQPP…AEPI) and 67–82 (QEFY…QQIP). The span at 207 to 228 (PGTQYRRNQQTGGGLPSTSVAP) shows a compositional bias: polar residues. Low complexity-rich tracts occupy residues 429-443 (RQRA…AAQR) and 453-467 (RPGA…PSMA). Residues 559 to 578 (MTQEEKNAHFARLTTDKEKP) are compositionally biased toward basic and acidic residues. The segment covering 592–603 (PHVPPPPPPPLV) has biased composition (pro residues). Residues 651–675 (TGQSGSSAAARQRTVSGSAARAQTY) are compositionally biased toward polar residues. Basic residues-rich tracts occupy residues 684–699 (QHHH…RHSS) and 731–741 (HRPRGRPKGTR). The segment covering 780-789 (SESEGIDEAA) has biased composition (acidic residues). Residues 794–842 (TMRCHCGMDHGDGDTIECEGCKTWQHMACMGLTLKSNTSKYKCEMCLPR) form a PHD-type zinc finger. Positions 865–904 (AAKKQKRKSEPVEQKQKSQPSTSRKSAPMALQQQPAEPRV) are disordered. Residues 881 to 899 (KSQPSTSRKSAPMALQQQP) show a composition bias toward polar residues. An SET domain is found at 973 to 1064 (MSNEVKRQPG…RNTEVTLPFD (92 aa)). A compositionally biased stretch (basic and acidic residues) spans 1099–1172 (RHRAMDHKKR…EAKERKKMEV (74 aa)). Disordered stretches follow at residues 1099 to 1333 (RHRA…SKNV), 1371 to 1536 (SGLL…STEG), and 1548 to 1645 (PLDD…TRWN). Residues 1103 to 1217 (MDHKKREAEE…GKRKEARRRS (115 aa)) are a coiled coil. Over residues 1173–1183 (EASAAAAPESS) the composition is skewed to low complexity. Residues 1188 to 1210 (AREERRIQQAEEMFRRQEEEGKR) are compositionally biased toward basic and acidic residues. Polar residues-rich tracts occupy residues 1258-1268 (TTQPSTSSFAT) and 1300-1311 (TVATPKDTTASN). 3 stretches are compositionally biased toward basic and acidic residues: residues 1382–1427 (SEVR…KKAN), 1434–1450 (KSEK…EKKP), and 1468–1485 (KKTE…ESSS). The span at 1554 to 1565 (SSSNTAPTTTIA) shows a compositional bias: polar residues.

Belongs to the class V-like SAM-binding methyltransferase superfamily. In terms of tissue distribution, expressed both in the germline and in somatic tissues.

It is found in the nucleus. It carries out the reaction L-lysyl(9)-[histone H3] + 3 S-adenosyl-L-methionine = N(6),N(6),N(6)-trimethyl-L-lysyl(9)-[histone H3] + 3 S-adenosyl-L-homocysteine + 3 H(+). In terms of biological role, histone methyltransferase that mediates trimethylation of 'Lys-9' of histone H3 in vitro. Involved in transcriptional regulation. Plays a role in the negative regulation of lifespan and in heat resistance. Together with set-9, negatively regulates lifespan in a germline-independent, partially daf-16-dependent fashion. Together with set-9, plays a role in germline development and maintenance and might play a role in the restriction of the trimethylation mark on histone H3 'Lys-4'(H3K4me3) to target genes specifically in the germline. Together with spr-5, required for transgenerational fertility. This chain is Histone-lysine N-methyltransferase set-26, found in Caenorhabditis elegans.